We begin with the raw amino-acid sequence, 253 residues long: MYIYRKPYEQNYWNNFILLSLYVNNKRVGVNKNITKLEYILLDIFLHGPLHTEFINYLEITNYINNRTYLYEKMLKEKSVNAINIILPPVMHTASFEYNYEIIEDLDSNKILNIYILNNKCYYCRKLKDDSYWEKFPFNEIPIFVNDKKVGLRLKTDKLKTTKNLTKVEYYLLDIFWFGPLKIEASEHYEKIMRQIKDRNKKYMCLYYEKIINGINIIFNISNNIEYKKFLNNDYSIKEMINVEHILTIYVLT.

The protein belongs to the A.longa ORF167/ORF288 family.

The protein resides in the plastid. This is an uncharacterized protein from Euglena longa (Euglenophycean alga).